Reading from the N-terminus, the 292-residue chain is Acetylglutamate kinase (292 aa).

Residues Gly64 to Gly65, Arg86, and Asn190 contribute to the substrate site.

The protein belongs to the acetylglutamate kinase family. ArgB subfamily.

It is found in the cytoplasm. It catalyses the reaction N-acetyl-L-glutamate + ATP = N-acetyl-L-glutamyl 5-phosphate + ADP. The protein operates within amino-acid biosynthesis; L-arginine biosynthesis; N(2)-acetyl-L-ornithine from L-glutamate: step 2/4. Functionally, catalyzes the ATP-dependent phosphorylation of N-acetyl-L-glutamate. The polypeptide is Acetylglutamate kinase (Geotalea uraniireducens (strain Rf4) (Geobacter uraniireducens)).